A 576-amino-acid polypeptide reads, in one-letter code: Putative export ATP-binding/permease protein RP696 (576 aa).

Residues 20-303 (LIIVMISLLS…IFELLSEMHL (284 aa)) enclose the ABC transmembrane type-1 domain. Transmembrane regions (helical) follow at residues 21 to 41 (IIVM…GSIF), 61 to 81 (ILYI…RSYF), 135 to 155 (FLSF…LMFF), 158 to 178 (FKLA…LIKF), 242 to 262 (ALFF…IVWI), and 277 to 297 (IISF…IFEL). Residues 336–572 (IEFKNVDFTY…SEIYRNICRE (237 aa)) form the ABC transporter domain. ATP is bound at residue 371–378 (GRSGAGKS).

This sequence belongs to the ABC transporter superfamily. Homodimer.

It is found in the cell inner membrane. In terms of biological role, part of an ABC transporter complex. Transmembrane domains (TMD) form a pore in the inner membrane and the ATP-binding domain (NBD) is responsible for energy generation. The polypeptide is Putative export ATP-binding/permease protein RP696 (Rickettsia prowazekii (strain Madrid E)).